Consider the following 222-residue polypeptide: Putative germin-like protein 3-2 (222 aa).

A signal peptide spans 1 to 22 (MAKLILATFAVVFLALAATSLA). Cys32 and Cys50 are oxidised to a cystine. Residues Asn55 and Asn71 are each glycosylated (N-linked (GlcNAc...) asparagine). The region spanning 64 to 212 (DGLTNAGNTT…AFQVDGGMVE (149 aa)) is the Cupin type-1 domain. Residues His112, His114, Glu119, and His158 each coordinate Mn(2+). The N-linked (GlcNAc...) asparagine glycan is linked to Asn165.

The protein belongs to the germin family. Oligomer (believed to be a pentamer but probably hexamer).

The protein resides in the secreted. The protein localises to the extracellular space. It localises to the apoplast. Functionally, may play a role in plant defense. Probably has no oxalate oxidase activity even if the active site is conserved. This Oryza sativa subsp. japonica (Rice) protein is Putative germin-like protein 3-2.